The sequence spans 160 residues: 2-C-methyl-D-erythritol 2,4-cyclodiphosphate synthase (160 aa).

A divalent metal cation contacts are provided by Asp-9 and His-11. Residues 9-11 and 35-36 contribute to the 4-CDP-2-C-methyl-D-erythritol 2-phosphate site; these read DVH and HS. A divalent metal cation is bound at residue His-43. 4-CDP-2-C-methyl-D-erythritol 2-phosphate is bound by residues 57-59, 62-66, and Phe-140; these read DIG and FPDND.

Belongs to the IspF family. Homotrimer. Requires a divalent metal cation as cofactor.

It carries out the reaction 4-CDP-2-C-methyl-D-erythritol 2-phosphate = 2-C-methyl-D-erythritol 2,4-cyclic diphosphate + CMP. It participates in isoprenoid biosynthesis; isopentenyl diphosphate biosynthesis via DXP pathway; isopentenyl diphosphate from 1-deoxy-D-xylulose 5-phosphate: step 4/6. In terms of biological role, involved in the biosynthesis of isopentenyl diphosphate (IPP) and dimethylallyl diphosphate (DMAPP), two major building blocks of isoprenoid compounds. Catalyzes the conversion of 4-diphosphocytidyl-2-C-methyl-D-erythritol 2-phosphate (CDP-ME2P) to 2-C-methyl-D-erythritol 2,4-cyclodiphosphate (ME-CPP) with a corresponding release of cytidine 5-monophosphate (CMP). The polypeptide is 2-C-methyl-D-erythritol 2,4-cyclodiphosphate synthase (Fusobacterium nucleatum subsp. nucleatum (strain ATCC 25586 / DSM 15643 / BCRC 10681 / CIP 101130 / JCM 8532 / KCTC 2640 / LMG 13131 / VPI 4355)).